Reading from the N-terminus, the 239-residue chain is Calcium load-activated calcium channel (239 aa).

The Lumenal segment spans residues 1 to 55; it reads MPRKRKCDLRAVRVGLLLGGGGVYGSRFRFTFPGCRALSPWRVRVQRRRCEMSTM. The helical transmembrane segment at 56–83 threads the bilayer; the sequence is FADTLLIVFISVCTALLAEGITWVLVYR. The stretch at 83-140 forms a coiled coil; the sequence is RTDKYKRLKAEVEKQSKKLEKKKETITESAGRQQKKKIERQEEKLKNNNRDLSMVRMK. At 84-137 the chain is on the cytoplasmic side; sequence TDKYKRLKAEVEKQSKKLEKKKETITESAGRQQKKKIERQEEKLKNNNRDLSMV. At S111 the chain carries Phosphoserine. Residues 138 to 157 traverse the membrane as a helical segment; the sequence is RMKSMFAIGFCFTALMGMFN. The Lumenal portion of the chain corresponds to 158–171; the sequence is SIFDGRVVAKLPFT. An intramembrane segment occupies 172–181; sequence PLSYIQGLSH. Residues 182-191 are Lumenal-facing; the sequence is RNLLGDDTTD. A helical membrane pass occupies residues 192-213; it reads CSFIFLYILCTMSIRQNIQKIL. The Cytoplasmic portion of the chain corresponds to 214–239; that stretch reads GLAPSRAATKQAGGFLGPPPPSGKFS. Phosphoserine is present on S239.

The protein belongs to the TMCO1 family. As to quaternary structure, homodimer and homotetramer. Homodimer under resting conditions; forms homotetramers following ER calcium overload. Component of the GET- and EMC-like (GEL) complex, composed of RAB5IF/OPTI and TMCO1. The GEL complex is part of the multi-pass translocon (MPT) complex, composed of three subcomplexes, the GEL complex (composed of RAB5IF/OPTI and TMCO1), the BOS complex (composed of NCLN/Nicalin, NOMO and TMEM147) and the PAT complex (composed of WDR83OS/Asterix and CCDC47). The MPT complex associates with the SEC61 complex. Widely expressed in adult and fetal tissues, with higher levels in thymus, prostate, testis and small intestine and lower levels in brain, placenta, lung and kidney. Present in most tissues in the eye, including the trabecular meshwork and retina (at protein level).

The protein localises to the endoplasmic reticulum membrane. The protein resides in the golgi apparatus membrane. Its subcellular location is the mitochondrion membrane. It catalyses the reaction Ca(2+)(in) = Ca(2+)(out). Its function is as follows. Endoplasmic reticulum (ER) calcium-selective channel preventing intracellular Ca2(+) stores from overfilling and maintaining calcium homeostasis in the ER. In response to endoplasmic reticulum (ER) Ca2(+) overloading, assembles into a homotetramer, forming a functional calcium-selective channel facilitating Ca2(+) release. Mediates ER Ca2(+) homeostasis in osteoblasts and plays a key role in bone formation, via the CaMKII-HDAC4-RUNX2 signaling axis. Component of the multi-pass translocon (MPT) complex that mediates insertion of multi-pass membrane proteins into the lipid bilayer of membranes. The MPT complex takes over after the SEC61 complex: following membrane insertion of the first few transmembrane segments of proteins by the SEC61 complex, the MPT complex occludes the lateral gate of the SEC61 complex to promote insertion of subsequent transmembrane regions. Within the MPT complex, the GEL subcomplex may mediate insertion of transmembrane regions into the membrane. This is Calcium load-activated calcium channel from Homo sapiens (Human).